The sequence spans 282 residues: GDT1-like protein 4 (282 aa).

Residues 1-26 form the signal peptide; that stretch reads MARRVSTTRLLLLLLLVAAAAAAAAA. Helical transmembrane passes span 67 to 87, 106 to 126, 138 to 158, 189 to 209, 227 to 247, and 259 to 279; these read AGLGLFDAFFASLSMILVSEI, TVLSGALSALVVMTILSTGLG, TNSAATVLYAFFGLRLLYIAW, IFSRFCTPIFLESFVLTFLAE, AVGVAVGATLGHTICTSFAVV, and GTVATIGGLLFLGFSLSSYFY.

The protein belongs to the GDT1 family.

Its subcellular location is the membrane. In Oryza sativa subsp. japonica (Rice), this protein is GDT1-like protein 4.